The sequence spans 398 residues: Isochorismate synthase DhbC (398 aa).

Ser-271 carries the phosphoserine modification.

It belongs to the isochorismate synthase family.

It carries out the reaction chorismate = isochorismate. The protein operates within siderophore biosynthesis; bacillibactin biosynthesis. This chain is Isochorismate synthase DhbC (dhbC), found in Bacillus subtilis (strain 168).